The chain runs to 677 residues: WD repeat-containing protein 43 (677 aa).

WD repeat units follow at residues 11–51 (PLAP…LHQE), 57–119 (HLSG…LHSK), 124–163 (GHDNRVNCIQWHQDSGCLYSCSDDKHIVEWNVQTCKVKCK), 166–205 (GDNSSVSSLCISPDGKMLLSAGRTIKLWVLETKEVYRHFT), 207–259 (HATP…KEKS), and 267–309 (TDEP…YCKK). S77 bears the Phosphoserine mark. A Glycyl lysine isopeptide (Lys-Gly) (interchain with G-Cter in SUMO1); alternate cross-link involves residue K309. K309 participates in a covalent cross-link: Glycyl lysine isopeptide (Lys-Gly) (interchain with G-Cter in SUMO2); alternate. T321 carries the phosphothreonine modification. Residue K384 forms a Glycyl lysine isopeptide (Lys-Gly) (interchain with G-Cter in SUMO1); alternate linkage. K384 participates in a covalent cross-link: Glycyl lysine isopeptide (Lys-Gly) (interchain with G-Cter in SUMO2); alternate. The residue at position 394 (T394) is a Phosphothreonine. 4 positions are modified to phosphoserine: S399, S431, S437, and S590. Disordered stretches follow at residues 414–445 (AIKPAPPQTEQVESKRKSGGNEVSIEERLGAM) and 582–677 (SEKT…SEEE). The span at 582 to 592 (SEKTKGATSPG) shows a compositional bias: polar residues. The segment covering 600–652 (EEESSEEESDDEIADKDSEDNWDEDEEESESEKDEDVEEEDEDAEGKDEENGE) has biased composition (acidic residues). Basic and acidic residues predominate over residues 653–663 (DRDTASEKELN). Phosphothreonine is present on T656. Residue S658 is modified to Phosphoserine. Residues 664-677 (GDSDLDPENESEEE) show a composition bias toward acidic residues.

The protein belongs to the UTP5 family. As to quaternary structure, part of the small subunit (SSU) processome, composed of more than 70 proteins and the RNA chaperone small nucleolar RNA (snoRNA) U3. May be a component of the proposed t-UTP subcomplex of the ribosomal small subunit (SSU) processome containing at least UTP4, WDR43, HEATR1, UTP15, WDR75. Binds to RNA; binding is required for its chromatin association. Interacts with CDK9, DDX21 and SUPT6H. Interacts with RNA polymerase II. Interacts directly with UTP4 and UTP15.

The protein localises to the nucleus. Its subcellular location is the nucleolus. It is found in the nucleolus fibrillar center. The protein resides in the nucleoplasm. In terms of biological role, ribosome biogenesis factor that coordinates hyperactive transcription and ribogenesis. Part of the small subunit (SSU) processome, first precursor of the small eukaryotic ribosomal subunit. During the assembly of the SSU processome in the nucleolus, many ribosome biogenesis factors, an RNA chaperone and ribosomal proteins associate with the nascent pre-rRNA and work in concert to generate RNA folding, modifications, rearrangements and cleavage as well as targeted degradation of pre-ribosomal RNA by the RNA exosome. Involved in nucleolar processing of pre-18S ribosomal RNA. Required for optimal pre-ribosomal RNA transcription by RNA polymerase I. Essential for stem cell pluripotency and embryonic development. In the nucleoplasm, recruited by promoter-associated/nascent transcripts and transcription to active promoters where it facilitates releases of elongation factor P-TEFb and paused RNA polymerase II to allow transcription elongation and maintain high-level expression of its targets genes. This is WD repeat-containing protein 43 from Homo sapiens (Human).